The chain runs to 441 residues: Transforming protein p54/c-ets-1 (441 aa).

One can recognise a PNT domain in the interval 51–136; sequence ATFSGFAKEQ…EHLEILQKEE (86 aa). An activation domain; required for transcription activation region spans residues 130–243; that stretch reads EILQKEEAKP…DNMCMGRASR (114 aa). A helix HI-1 region spans residues 304-312; the sequence is FKDYVRDRA. The tract at residues 323-330 is helix HI-2; it reads AAALAGYT. A DNA-binding region (ETS) is located at residues 335–415; the sequence is IQLWQFLLEL…AGKRYVYRFV (81 aa). Residues 418-422 form a helix H4 region; sequence LQSLL. A helix H5 region spans residues 426–432; that stretch reads PEELHAM.

This sequence belongs to the ETS family. Binds DNA as a homodimer; homodimerization is required for transcription activation.

It is found in the nucleus. It localises to the cytoplasm. With respect to regulation, autoinhibited by a module composed of four alpha helices (HI-1, HI-2, H4, and H5) that flank the DNA-binding ETS domain, reducing the affinity for DNA. Its function is as follows. Transcription factor. Directly controls the expression of cytokine and chemokine genes in a wide variety of different cellular contexts. This Gallus gallus (Chicken) protein is Transforming protein p54/c-ets-1 (ETS1).